Here is a 602-residue protein sequence, read N- to C-terminus: MKRGKCKEKDNGLKRISSESEVWNFLDVTVSELNKQKRSPGQTVSKRLHKKQRVVSNPDLSLPSSPVKQILRNGLQNSKYGSHKTGLERSASCSSIDASANHSSTTYREQRSYLMEEGLDTQPIVPREVSSGRELDSTNHTIGTERAFLIEEDVSEDDEIQMKSIHELRFAGEQQRIVDEIEYLVDGVTFSGNSSASRYLSLIGIAEKMFDNSFRLCLKSIRDVFLRIFEEIDPKDTLHTFLQIYIFATMANEMDCMSSLLDAYSNNVKLLLQTAITLEPQVPVSILAKSLPKSVKGAVQEFVIKAELTFSFSNESLASSDSISLAAIALMKTSSGVFAESELFTELINLLIEKSYPILKENDGSNNFLLHALCSSLEKFTDFQGSEKIQKVSQILSSKLQILIDEHNETNSPKIDDTVVHACSEKLLRTLIQTVNSNSDHALAVSKSEVPLFAYKILQKFSNFSSDDETTRELIILILGLLLGLVEESHEFIQTITHVEVSFGASALDVLISFYQKNESIVEISGYVVMILSHCFLNDPKAFAQLKPLISQFYESLHKFKNFHLKLKEELMMMGSNGLAIVSIIDELHKSLQDYLRSDLVK.

A disordered region spans residues 34–66; it reads NKQKRSPGQTVSKRLHKKQRVVSNPDLSLPSSP. Residues 54-66 show a composition bias toward polar residues; sequence VVSNPDLSLPSSP. The 333-residue stretch at 160 to 492 folds into the WAPL domain; it reads IQMKSIHELR…LGLVEESHEF (333 aa).

Belongs to the WAPL family.

Its subcellular location is the nucleus. The protein localises to the chromosome. Functionally, regulator of sister chromatid cohesion in mitosis which negatively regulates cohesin association with chromatin. The chain is Wings apart-like protein homolog 1 (wpl1) from Schizosaccharomyces pombe (strain 972 / ATCC 24843) (Fission yeast).